Reading from the N-terminus, the 254-residue chain is Ribosomal RNA small subunit methyltransferase J (254 aa).

S-adenosyl-L-methionine is bound by residues 107 to 108 (RD), 123 to 124 (ER), and Asp177.

This sequence belongs to the methyltransferase superfamily. RsmJ family.

The protein localises to the cytoplasm. It catalyses the reaction guanosine(1516) in 16S rRNA + S-adenosyl-L-methionine = N(2)-methylguanosine(1516) in 16S rRNA + S-adenosyl-L-homocysteine + H(+). In terms of biological role, specifically methylates the guanosine in position 1516 of 16S rRNA. The polypeptide is Ribosomal RNA small subunit methyltransferase J (Histophilus somni (strain 2336) (Haemophilus somnus)).